We begin with the raw amino-acid sequence, 117 residues long: CUE domain-containing protein CUE4 (117 aa).

The disordered stretch occupies residues 27–74; that stretch reads QVPSRTVQDAKPAPSVATNDPSPEPVPSAPEERVARLNRHGSDRKRAV. A Glycyl lysine isopeptide (Lys-Gly) (interchain with G-Cter in ubiquitin) cross-link involves residue Lys37. Residue Ser48 is modified to Phosphoserine. Over residues 56–74 the composition is skewed to basic and acidic residues; that stretch reads PEERVARLNRHGSDRKRAV. Positions 74–116 constitute a CUE domain; sequence VNSDMVEIVMTMAPHVPQEKVVQDLRNTGSIEHTMENIFAGKL.

Ubiquitinated.

The protein localises to the cytoplasm. Its subcellular location is the endoplasmic reticulum. This Saccharomyces cerevisiae (strain ATCC 204508 / S288c) (Baker's yeast) protein is CUE domain-containing protein CUE4 (CUE4).